We begin with the raw amino-acid sequence, 167 residues long: Methyl-coenzyme M reductase II operon protein D (167 aa).

MCR is composed of three subunits: alpha, beta, and gamma. The function of protein D is not known.

The polypeptide is Methyl-coenzyme M reductase II operon protein D (mrtD) (Methanocaldococcus jannaschii (strain ATCC 43067 / DSM 2661 / JAL-1 / JCM 10045 / NBRC 100440) (Methanococcus jannaschii)).